The chain runs to 347 residues: Probable dual-specificity RNA methyltransferase RlmN (347 aa).

Glu-94 (proton acceptor) is an active-site residue. In terms of domain architecture, Radical SAM core spans 100–319 (YPSRTIACIS…LDTLVKNGID (220 aa)). The cysteines at positions 107 and 334 are disulfide-linked. Residues Cys-114, Cys-118, and Cys-121 each contribute to the [4Fe-4S] cluster site. S-adenosyl-L-methionine-binding positions include 161-162 (GE), Ser-193, 216-218 (SLH), and Asn-292. Cys-334 serves as the catalytic S-methylcysteine intermediate.

It belongs to the radical SAM superfamily. RlmN family. [4Fe-4S] cluster is required as a cofactor.

The protein localises to the cytoplasm. The enzyme catalyses adenosine(2503) in 23S rRNA + 2 reduced [2Fe-2S]-[ferredoxin] + 2 S-adenosyl-L-methionine = 2-methyladenosine(2503) in 23S rRNA + 5'-deoxyadenosine + L-methionine + 2 oxidized [2Fe-2S]-[ferredoxin] + S-adenosyl-L-homocysteine. The catalysed reaction is adenosine(37) in tRNA + 2 reduced [2Fe-2S]-[ferredoxin] + 2 S-adenosyl-L-methionine = 2-methyladenosine(37) in tRNA + 5'-deoxyadenosine + L-methionine + 2 oxidized [2Fe-2S]-[ferredoxin] + S-adenosyl-L-homocysteine. Its function is as follows. Specifically methylates position 2 of adenine 2503 in 23S rRNA and position 2 of adenine 37 in tRNAs. The polypeptide is Probable dual-specificity RNA methyltransferase RlmN (Petrotoga mobilis (strain DSM 10674 / SJ95)).